A 358-amino-acid polypeptide reads, in one-letter code: tRNA N6-adenosine threonylcarbamoyltransferase (358 aa).

Fe cation is bound by residues His-118 and His-122. Residues 143–147, Asp-176, Gly-189, and Asn-298 contribute to the substrate site; that span reads IVSGG. Asp-326 contributes to the Fe cation binding site.

It belongs to the KAE1 / TsaD family. Requires Fe(2+) as cofactor.

It localises to the cytoplasm. The catalysed reaction is L-threonylcarbamoyladenylate + adenosine(37) in tRNA = N(6)-L-threonylcarbamoyladenosine(37) in tRNA + AMP + H(+). Its function is as follows. Required for the formation of a threonylcarbamoyl group on adenosine at position 37 (t(6)A37) in tRNAs that read codons beginning with adenine. Is involved in the transfer of the threonylcarbamoyl moiety of threonylcarbamoyl-AMP (TC-AMP) to the N6 group of A37, together with TsaE and TsaB. TsaD likely plays a direct catalytic role in this reaction. The sequence is that of tRNA N6-adenosine threonylcarbamoyltransferase from Rhodopirellula baltica (strain DSM 10527 / NCIMB 13988 / SH1).